The sequence spans 443 residues: D-serine dehydratase (443 aa).

Residue Lys118 is modified to N6-(pyridoxal phosphate)lysine.

This sequence belongs to the serine/threonine dehydratase family. DsdA subfamily. As to quaternary structure, monomer. It depends on pyridoxal 5'-phosphate as a cofactor.

The catalysed reaction is D-serine = pyruvate + NH4(+). The polypeptide is D-serine dehydratase (Escherichia coli O17:K52:H18 (strain UMN026 / ExPEC)).